The chain runs to 1407 residues: DNA-directed RNA polymerase subunit beta' (1407 aa).

Zn(2+)-binding residues include Cys70, Cys72, Cys85, and Cys88. Mg(2+) is bound by residues Asp460, Asp462, and Asp464. Residues Cys814, Cys888, Cys895, and Cys898 each contribute to the Zn(2+) site.

It belongs to the RNA polymerase beta' chain family. The RNAP catalytic core consists of 2 alpha, 1 beta, 1 beta' and 1 omega subunit. When a sigma factor is associated with the core the holoenzyme is formed, which can initiate transcription. It depends on Mg(2+) as a cofactor. Zn(2+) serves as cofactor.

The enzyme catalyses RNA(n) + a ribonucleoside 5'-triphosphate = RNA(n+1) + diphosphate. In terms of biological role, DNA-dependent RNA polymerase catalyzes the transcription of DNA into RNA using the four ribonucleoside triphosphates as substrates. In Salmonella choleraesuis (strain SC-B67), this protein is DNA-directed RNA polymerase subunit beta'.